Here is a 155-residue protein sequence, read N- to C-terminus: MALYEHVFLARQDISAQQVDALVEQYKGVIEANGGKVGRIENWGLKSLTYRIKKNRKAHYALMDIDAPAAAVQEMERQMRISEDVLRYMTIAVEKHEEGPSAMMQKRDRDDRPREGGRGPREGGFGDRDRGPRPPREGGFGDREDRPRRPREDRV.

The disordered stretch occupies residues 94–155; sequence EKHEEGPSAM…RPRRPREDRV (62 aa).

It belongs to the bacterial ribosomal protein bS6 family.

Functionally, binds together with bS18 to 16S ribosomal RNA. This is Small ribosomal subunit protein bS6 from Rhizobium leguminosarum bv. trifolii (strain WSM2304).